The primary structure comprises 302 residues: MSKRVTVLMGGFSTERAVSLNSGAAAGEALRQAGYAVTLLDVGRDVAAFIAALTQTRPDVVFNALHGRFGEDGAIQGILDIMALPYTHSGRLASAIAMDKPSAKLVFERFAIPVAPHVVADRASVLAETAMARPYVVKPLDQGSSVGVTIVTSETNDLPFSRDDWPYGRQVMVERFIPGRELTVGVMGDKALGVTEIVTDHRFYDYDAKYAQGGSRHIVPAPVAPEVFAQAQELSVLAHQALGCRGVSRADLRFDGETLYMLEVNTQPGMTDTSLVPEQALHAGISFPDLVTWLVETAQCDA.

The ATP-grasp domain occupies 104 to 296; sequence KLVFERFAIP…FPDLVTWLVE (193 aa). Residue 130-183 participates in ATP binding; that stretch reads AMARPYVVKPLDQGSSVGVTIVTSETNDLPFSRDDWPYGRQVMVERFIPGRELT. Mg(2+) is bound by residues aspartate 251, glutamate 263, and asparagine 265.

It belongs to the D-alanine--D-alanine ligase family. Mg(2+) is required as a cofactor. Mn(2+) serves as cofactor.

The protein localises to the cytoplasm. The catalysed reaction is 2 D-alanine + ATP = D-alanyl-D-alanine + ADP + phosphate + H(+). It functions in the pathway cell wall biogenesis; peptidoglycan biosynthesis. In terms of biological role, cell wall formation. This is D-alanine--D-alanine ligase from Rhodospirillum rubrum (strain ATCC 11170 / ATH 1.1.1 / DSM 467 / LMG 4362 / NCIMB 8255 / S1).